The primary structure comprises 372 residues: UDP-N-acetylglucosamine--N-acetylmuramyl-(pentapeptide) pyrophosphoryl-undecaprenol N-acetylglucosamine transferase (372 aa).

UDP-N-acetyl-alpha-D-glucosamine is bound by residues 16-18, N128, R164, S192, I250, and Q295; that span reads TGG.

This sequence belongs to the glycosyltransferase 28 family. MurG subfamily.

It localises to the cell inner membrane. It carries out the reaction di-trans,octa-cis-undecaprenyl diphospho-N-acetyl-alpha-D-muramoyl-L-alanyl-D-glutamyl-meso-2,6-diaminopimeloyl-D-alanyl-D-alanine + UDP-N-acetyl-alpha-D-glucosamine = di-trans,octa-cis-undecaprenyl diphospho-[N-acetyl-alpha-D-glucosaminyl-(1-&gt;4)]-N-acetyl-alpha-D-muramoyl-L-alanyl-D-glutamyl-meso-2,6-diaminopimeloyl-D-alanyl-D-alanine + UDP + H(+). It participates in cell wall biogenesis; peptidoglycan biosynthesis. In terms of biological role, cell wall formation. Catalyzes the transfer of a GlcNAc subunit on undecaprenyl-pyrophosphoryl-MurNAc-pentapeptide (lipid intermediate I) to form undecaprenyl-pyrophosphoryl-MurNAc-(pentapeptide)GlcNAc (lipid intermediate II). The polypeptide is UDP-N-acetylglucosamine--N-acetylmuramyl-(pentapeptide) pyrophosphoryl-undecaprenol N-acetylglucosamine transferase (Paraburkholderia phytofirmans (strain DSM 17436 / LMG 22146 / PsJN) (Burkholderia phytofirmans)).